We begin with the raw amino-acid sequence, 351 residues long: Histidinol-phosphate aminotransferase (351 aa).

At Lys221 the chain carries N6-(pyridoxal phosphate)lysine.

It belongs to the class-II pyridoxal-phosphate-dependent aminotransferase family. Histidinol-phosphate aminotransferase subfamily. As to quaternary structure, homodimer. Pyridoxal 5'-phosphate serves as cofactor.

It catalyses the reaction L-histidinol phosphate + 2-oxoglutarate = 3-(imidazol-4-yl)-2-oxopropyl phosphate + L-glutamate. It participates in amino-acid biosynthesis; L-histidine biosynthesis; L-histidine from 5-phospho-alpha-D-ribose 1-diphosphate: step 7/9. This is Histidinol-phosphate aminotransferase from Staphylococcus haemolyticus (strain JCSC1435).